Consider the following 347-residue polypeptide: Uroporphyrinogen decarboxylase (347 aa).

Residues 36 to 40, D86, Y160, S212, and H326 each bind substrate; that span reads RQAGR.

The protein belongs to the uroporphyrinogen decarboxylase family. In terms of assembly, homodimer.

Its subcellular location is the cytoplasm. It carries out the reaction uroporphyrinogen III + 4 H(+) = coproporphyrinogen III + 4 CO2. Its pathway is porphyrin-containing compound metabolism; protoporphyrin-IX biosynthesis; coproporphyrinogen-III from 5-aminolevulinate: step 4/4. Functionally, catalyzes the decarboxylation of four acetate groups of uroporphyrinogen-III to yield coproporphyrinogen-III. This Wolbachia sp. subsp. Brugia malayi (strain TRS) protein is Uroporphyrinogen decarboxylase.